The primary structure comprises 393 residues: MAFHNNHFNHFTDQQQHQPPPPPQQQQQQHFQESAPPNWLLRSDNNFLNLHTAASAAATSSDSPSSAAANQWLSRSSSFLQRGNTANNNNNETSGDVIEDVPGGEESMIGEKKEAERWQNARHKAEILSHPLYEQLLSAHVACLRIATPVDQLPRIDAQLAQSQNVVAKYSTLEAAQGLLAGDDKELDHFMTHYVLLLCSFKEQLQQHVRVHAMEAVMACWEIEQSLQSFTGVSPGEGTGATMSEDEDEQVESDAHLFDGSLDGLGFGPLVPTESERSLMERVRQELKHELKQGYKEKIVDIREEILRKRRAGKLPGDTTSVLKSWWQSHSKWPYPTEEDKARLVQETGLQLKQINNWFINQRKRNWHSNPSSSTVSKNKRRSNAGENSGRDR.

Positions 1–13 are enriched in polar residues; sequence MAFHNNHFNHFTD. 2 disordered regions span residues 1 to 39 and 81 to 114; these read MAFH…PPNW and QRGN…EKKE. Positions 286–306 constitute an ELK domain; it reads ELKHELKQGYKEKIVDIREEI. Positions 307–370 form a DNA-binding region, homeobox; TALE-type; it reads LRKRRAGKLP…NQRKRNWHSN (64 aa). A disordered region spans residues 363–393; it reads RKRNWHSNPSSSTVSKNKRRSNAGENSGRDR. The segment covering 368–377 has biased composition (polar residues); that stretch reads HSNPSSSTVS.

Belongs to the TALE/KNOX homeobox family. As to quaternary structure, may form heterodimeric complex with the TALE/BELL proteins. Interacts with OFP1, OFP2, OFP4 and OFP12. Interacts with KNATM-B.

The protein resides in the nucleus. The chain is Homeobox protein knotted-1-like 4 (KNAT4) from Arabidopsis thaliana (Mouse-ear cress).